A 251-amino-acid polypeptide reads, in one-letter code: Probable transcriptional regulatory protein DET0444 (251 aa).

Belongs to the TACO1 family.

It is found in the cytoplasm. The sequence is that of Probable transcriptional regulatory protein DET0444 from Dehalococcoides mccartyi (strain ATCC BAA-2266 / KCTC 15142 / 195) (Dehalococcoides ethenogenes (strain 195)).